An 88-amino-acid chain; its full sequence is uncharacterized protein (88 aa).

This is an uncharacterized protein from Treponema pallidum (strain Nichols).